A 66-amino-acid chain; its full sequence is Large ribosomal subunit protein bL33 (66 aa).

This sequence belongs to the bacterial ribosomal protein bL33 family.

The protein is Large ribosomal subunit protein bL33 of Wolbachia sp. subsp. Brugia malayi (strain TRS).